A 453-amino-acid polypeptide reads, in one-letter code: Bifunctional protein GlmU (453 aa).

The interval 1-225 (MNIVILAAGT…EWETLGVNSK (225 aa)) is pyrophosphorylase. UDP-N-acetyl-alpha-D-glucosamine-binding positions include 6-9 (LAAG), Lys20, Gln71, 76-77 (GT), 98-100 (YGD), Gly135, Glu150, Asn165, and Asn223. Position 100 (Asp100) interacts with Mg(2+). Asn223 provides a ligand contact to Mg(2+). The linker stretch occupies residues 226-246 (AQLAELERIHQRKLAEALLAD). Residues 247-453 (GVTLADPARI…GYVRPVKKKS (207 aa)) are N-acetyltransferase. Positions 329 and 347 each coordinate UDP-N-acetyl-alpha-D-glucosamine. The active-site Proton acceptor is the His359. Tyr362 and Asn373 together coordinate UDP-N-acetyl-alpha-D-glucosamine. Acetyl-CoA is bound by residues Ala376, 382–383 (NY), Ser401, and Ala419.

The protein in the N-terminal section; belongs to the N-acetylglucosamine-1-phosphate uridyltransferase family. This sequence in the C-terminal section; belongs to the transferase hexapeptide repeat family. Homotrimer. Mg(2+) serves as cofactor.

The protein localises to the cytoplasm. The catalysed reaction is alpha-D-glucosamine 1-phosphate + acetyl-CoA = N-acetyl-alpha-D-glucosamine 1-phosphate + CoA + H(+). It carries out the reaction N-acetyl-alpha-D-glucosamine 1-phosphate + UTP + H(+) = UDP-N-acetyl-alpha-D-glucosamine + diphosphate. The protein operates within nucleotide-sugar biosynthesis; UDP-N-acetyl-alpha-D-glucosamine biosynthesis; N-acetyl-alpha-D-glucosamine 1-phosphate from alpha-D-glucosamine 6-phosphate (route II): step 2/2. It participates in nucleotide-sugar biosynthesis; UDP-N-acetyl-alpha-D-glucosamine biosynthesis; UDP-N-acetyl-alpha-D-glucosamine from N-acetyl-alpha-D-glucosamine 1-phosphate: step 1/1. It functions in the pathway bacterial outer membrane biogenesis; LPS lipid A biosynthesis. Functionally, catalyzes the last two sequential reactions in the de novo biosynthetic pathway for UDP-N-acetylglucosamine (UDP-GlcNAc). The C-terminal domain catalyzes the transfer of acetyl group from acetyl coenzyme A to glucosamine-1-phosphate (GlcN-1-P) to produce N-acetylglucosamine-1-phosphate (GlcNAc-1-P), which is converted into UDP-GlcNAc by the transfer of uridine 5-monophosphate (from uridine 5-triphosphate), a reaction catalyzed by the N-terminal domain. This is Bifunctional protein GlmU from Burkholderia thailandensis (strain ATCC 700388 / DSM 13276 / CCUG 48851 / CIP 106301 / E264).